A 272-amino-acid polypeptide reads, in one-letter code: Ribosomal RNA small subunit methyltransferase A (272 aa).

S-adenosyl-L-methionine-binding residues include histidine 13, leucine 15, glycine 40, glutamate 61, aspartate 85, and asparagine 105.

Belongs to the class I-like SAM-binding methyltransferase superfamily. rRNA adenine N(6)-methyltransferase family. RsmA subfamily.

It is found in the cytoplasm. The catalysed reaction is adenosine(1518)/adenosine(1519) in 16S rRNA + 4 S-adenosyl-L-methionine = N(6)-dimethyladenosine(1518)/N(6)-dimethyladenosine(1519) in 16S rRNA + 4 S-adenosyl-L-homocysteine + 4 H(+). Its function is as follows. Specifically dimethylates two adjacent adenosines (A1518 and A1519) in the loop of a conserved hairpin near the 3'-end of 16S rRNA in the 30S particle. May play a critical role in biogenesis of 30S subunits. This chain is Ribosomal RNA small subunit methyltransferase A, found in Bacteroides fragilis (strain ATCC 25285 / DSM 2151 / CCUG 4856 / JCM 11019 / LMG 10263 / NCTC 9343 / Onslow / VPI 2553 / EN-2).